We begin with the raw amino-acid sequence, 88 residues long: MNDNNERKPLRTIKGLVISNKMQKTVTVLVERQIKHALYGKYIKRSTKLHAHDADDLCNEGDVVLMTEVAPISKTKNWRVVEIVARSD.

It belongs to the universal ribosomal protein uS17 family. As to quaternary structure, part of the 30S ribosomal subunit.

Its function is as follows. One of the primary rRNA binding proteins, it binds specifically to the 5'-end of 16S ribosomal RNA. This chain is Small ribosomal subunit protein uS17, found in Xylella fastidiosa (strain M23).